The chain runs to 231 residues: UMP-CMP kinase (231 aa).

57–62 contacts ATP; that stretch reads GSGKGT. Positions 77-106 are NMP; the sequence is SAGDLLRREIASGSAYGSVILSTIREGKIV. A ribonucleoside 5'-phosphate-binding positions include arginine 83, 104–106, and 131–134; these read KIV and GFPR. CMP is bound at residue asparagine 138. The tract at residues 169 to 177 is LID; that stretch reads NRNQGRVDD. Position 170 (arginine 170) interacts with ATP. A ribonucleoside 5'-phosphate contacts are provided by arginine 174 and arginine 185. Position 213 (glycine 213) interacts with ATP.

It belongs to the adenylate kinase family. UMP-CMP kinase subfamily. In terms of assembly, monomer. The cofactor is Mg(2+).

The protein resides in the cytoplasm. Its subcellular location is the nucleus. The catalysed reaction is CMP + ATP = CDP + ADP. It catalyses the reaction dCMP + ATP = dCDP + ADP. The enzyme catalyses UMP + ATP = UDP + ADP. Functionally, catalyzes the phosphorylation of pyrimidine nucleoside monophosphates at the expense of ATP. Plays an important role in de novo pyrimidine nucleotide biosynthesis. Has preference for UMP and CMP as phosphate acceptors. In Prunus armeniaca (Apricot), this protein is UMP-CMP kinase.